We begin with the raw amino-acid sequence, 630 residues long: MDPVAIENVTPEIECGRFPAKIVVNSKFTVTAEVFRAGHDLVYPVLMYRKLKKRWRSVAMKGTGNDLYEASFTPDEPGIYEYKISAWKDSYGTLIRNINAWLGSNEDVEQDLIEAINLIKDAYKRSSGNDKKIIKRYLDDLINSDLNKKVMILNDNNFSSIIKKYQKKIDKTDYRTLRLIADPEYGGYGSWYELFPRSIGNFNDIIKHLNYVKSMNFNVLYLTPIHPIGITNRRGKNGSRISDKNDPGSPWAIGNDSGGHYSINSDLGSLEDFKNLLRSAREKNIMIAMDIALQCSPDHPYVRDHPEWFYHRPDGSIRYAENPPKKYYDIYPLNFETKNKMALWNEMKNIFLYWISNGVKIFRVDNPHTKPLDFWEWLINDIKRDHPDVVFLSEAFTRENLMFELSKRGFTMSYTYFTWKLTKGEITEYFKKLYSYPYNFFFRPMLFTNTPDILGRDLSMGRNEFIIRSVLASTLSSLWGIYSGFELCENDRLDDTEEYLNSEKYEIKRRNFNSDNNIKDIIARLNSIRDEMPALRSGKIKFCETDNDKIIAYARYNNENKILVVLNLDTMNVQSGFIRVPLNDFSMDLNSIYDVHDVLNNNHYKWSGEYNYVRLIPGKRQAHIMVIKNA.

3 residues coordinate alpha-maltose 1-phosphate: Arg234, Gln294, and Asp329. Asp365 acts as the Nucleophile in catalysis. Alpha-maltose 1-phosphate is bound at residue Asn366. The Proton donor role is filled by Glu394. An alpha-maltose 1-phosphate-binding site is contributed by 504 to 505 (KY).

It belongs to the glycosyl hydrolase 13 family. GlgE subfamily. In terms of assembly, homodimer.

The catalysed reaction is alpha-maltose 1-phosphate + [(1-&gt;4)-alpha-D-glucosyl](n) = [(1-&gt;4)-alpha-D-glucosyl](n+2) + phosphate. Functionally, maltosyltransferase that uses maltose 1-phosphate (M1P) as the sugar donor to elongate linear or branched alpha-(1-&gt;4)-glucans. Is involved in a branched alpha-glucan biosynthetic pathway from trehalose, together with TreS, Mak and GlgB. This Picrophilus torridus (strain ATCC 700027 / DSM 9790 / JCM 10055 / NBRC 100828 / KAW 2/3) protein is Alpha-1,4-glucan:maltose-1-phosphate maltosyltransferase.